An 824-amino-acid polypeptide reads, in one-letter code: Dapper 1 (824 aa).

5 disordered regions span residues 1 to 34, 61 to 80, 131 to 150, 454 to 487, and 516 to 536; these read MKPI…QRTR, ALTP…GDTP, EEHL…LSDG, TSNV…ESTQ, and ASSS…SSSQ. Residues 2 to 343 form an interaction with tcf7l1 region; sequence KPIPATPDHL…PVRTNKPRTS (342 aa). Positions 11–34 are enriched in basic and acidic residues; that stretch reads LGQHQESPRRKDKGEAESERQRTR. Positions 19 to 47 form a coiled coil; that stretch reads RRKDKGEAESERQRTRERLEATLAGLAEL. Basic and acidic residues predominate over residues 520 to 530; it reads FDERPPLDFKS. Positions 821–824 match the PDZ-binding motif; that stretch reads MTTV.

This sequence belongs to the dapper family. As to quaternary structure, interacts with dbf4, dvl2 and tcf7l1.

The protein resides in the cytoplasm. Its subcellular location is the nucleus. Functionally, involved in regulation of intracellular signaling pathways during development. Specifically thought to play a role in canonical and/or non-canonical Wnt signaling pathways through interaction with DSH (Dishevelled) family proteins. Binds to dvl2 and regulates the degradation of ctnnb1/beta-catenin, thereby modulating the transcriptional activation of target genes of the Wnt signaling pathway. May also bind to and directly stimulate the activity of tcf7l1. The polypeptide is Dapper 1 (dact1) (Xenopus tropicalis (Western clawed frog)).